Reading from the N-terminus, the 296-residue chain is Formamidopyrimidine-DNA glycosylase (296 aa).

Residue P2 is the Schiff-base intermediate with DNA of the active site. E3 (proton donor) is an active-site residue. Residue K61 is the Proton donor; for beta-elimination activity of the active site. DNA is bound by residues H104, R123, and K169. Residues 255-289 (DAYGREGEPCRRCGAIMRRDKFMNRSSFYCPRCQP) form an FPG-type zinc finger. The active-site Proton donor; for delta-elimination activity is R279.

It belongs to the FPG family. As to quaternary structure, monomer. The cofactor is Zn(2+).

It catalyses the reaction Hydrolysis of DNA containing ring-opened 7-methylguanine residues, releasing 2,6-diamino-4-hydroxy-5-(N-methyl)formamidopyrimidine.. The catalysed reaction is 2'-deoxyribonucleotide-(2'-deoxyribose 5'-phosphate)-2'-deoxyribonucleotide-DNA = a 3'-end 2'-deoxyribonucleotide-(2,3-dehydro-2,3-deoxyribose 5'-phosphate)-DNA + a 5'-end 5'-phospho-2'-deoxyribonucleoside-DNA + H(+). Its function is as follows. Involved in base excision repair of DNA damaged by oxidation or by mutagenic agents. Acts as a DNA glycosylase that recognizes and removes damaged bases. Has a preference for oxidized purines, such as 7,8-dihydro-8-oxoguanine (8-oxoG). Has AP (apurinic/apyrimidinic) lyase activity and introduces nicks in the DNA strand. Cleaves the DNA backbone by beta-delta elimination to generate a single-strand break at the site of the removed base with both 3'- and 5'-phosphates. In Mycobacterium sp. (strain KMS), this protein is Formamidopyrimidine-DNA glycosylase.